The chain runs to 332 residues: GTP 3',8-cyclase (332 aa).

The 226-residue stretch at 9–234 (TFGRRISYLR…DSDHRTGGPS (226 aa)) folds into the Radical SAM core domain. Arg18 contacts GTP. Residues Cys25 and Cys29 each coordinate [4Fe-4S] cluster. Residue Tyr31 coordinates S-adenosyl-L-methionine. Residue Cys32 participates in [4Fe-4S] cluster binding. Arg67 is a binding site for GTP. Gly71 is an S-adenosyl-L-methionine binding site. Residue Thr100 coordinates GTP. Ser124 contacts S-adenosyl-L-methionine. Residue Lys160 participates in GTP binding. Residue Met194 participates in S-adenosyl-L-methionine binding. Cys257 and Cys260 together coordinate [4Fe-4S] cluster. A GTP-binding site is contributed by 262–264 (RVR). Residue Cys274 participates in [4Fe-4S] cluster binding.

This sequence belongs to the radical SAM superfamily. MoaA family. Monomer and homodimer. The cofactor is [4Fe-4S] cluster.

The enzyme catalyses GTP + AH2 + S-adenosyl-L-methionine = (8S)-3',8-cyclo-7,8-dihydroguanosine 5'-triphosphate + 5'-deoxyadenosine + L-methionine + A + H(+). It functions in the pathway cofactor biosynthesis; molybdopterin biosynthesis. In terms of biological role, catalyzes the cyclization of GTP to (8S)-3',8-cyclo-7,8-dihydroguanosine 5'-triphosphate. This Erythrobacter litoralis (strain HTCC2594) protein is GTP 3',8-cyclase.